The following is a 348-amino-acid chain: GTP 3',8-cyclase (348 aa).

Residues 24–242 form the Radical SAM core domain; the sequence is PFGRAVTYLR…EKQFTLTDID (219 aa). Arginine 33 contributes to the GTP binding site. Residues cysteine 40 and cysteine 44 each contribute to the [4Fe-4S] cluster site. Residue tyrosine 46 coordinates S-adenosyl-L-methionine. Position 47 (cysteine 47) interacts with [4Fe-4S] cluster. Arginine 82 contributes to the GTP binding site. Glycine 86 lines the S-adenosyl-L-methionine pocket. Threonine 115 contacts GTP. S-adenosyl-L-methionine is bound at residue serine 139. Position 175 (lysine 175) interacts with GTP. Methionine 209 is a binding site for S-adenosyl-L-methionine. Residues cysteine 272 and cysteine 275 each coordinate [4Fe-4S] cluster. 277 to 279 is a binding site for GTP; sequence RVR. Cysteine 289 is a [4Fe-4S] cluster binding site.

Belongs to the radical SAM superfamily. MoaA family. Monomer and homodimer. The cofactor is [4Fe-4S] cluster.

The enzyme catalyses GTP + AH2 + S-adenosyl-L-methionine = (8S)-3',8-cyclo-7,8-dihydroguanosine 5'-triphosphate + 5'-deoxyadenosine + L-methionine + A + H(+). Its pathway is cofactor biosynthesis; molybdopterin biosynthesis. Its function is as follows. Catalyzes the cyclization of GTP to (8S)-3',8-cyclo-7,8-dihydroguanosine 5'-triphosphate. The polypeptide is GTP 3',8-cyclase (Rhizobium leguminosarum bv. trifolii (strain WSM2304)).